A 275-amino-acid chain; its full sequence is 3-methyl-2-oxobutanoate hydroxymethyltransferase (275 aa).

Mg(2+)-binding residues include Asp49 and Asp88. Residues 49-50, Asp88, and Lys118 each bind 3-methyl-2-oxobutanoate; that span reads DS. Glu120 serves as a coordination point for Mg(2+). Glu187 (proton acceptor) is an active-site residue.

This sequence belongs to the PanB family. Homodecamer; pentamer of dimers. Mg(2+) is required as a cofactor.

Its subcellular location is the cytoplasm. It catalyses the reaction 3-methyl-2-oxobutanoate + (6R)-5,10-methylene-5,6,7,8-tetrahydrofolate + H2O = 2-dehydropantoate + (6S)-5,6,7,8-tetrahydrofolate. It functions in the pathway cofactor biosynthesis; (R)-pantothenate biosynthesis; (R)-pantoate from 3-methyl-2-oxobutanoate: step 1/2. In terms of biological role, catalyzes the reversible reaction in which hydroxymethyl group from 5,10-methylenetetrahydrofolate is transferred onto alpha-ketoisovalerate to form ketopantoate. The protein is 3-methyl-2-oxobutanoate hydroxymethyltransferase of Hyphomonas neptunium (strain ATCC 15444).